A 303-amino-acid polypeptide reads, in one-letter code: MKNLLSMEALTVHEIEHLLEQAAQFKHGKKATFKEQTFAVNMFFEPSTRTHTSFEVAEKKLGVEVISFDASSSSMTKGETLYDTLLTMQAVGVNVAVIRHSDENYYAGLENLDIAIVNGGDGCGEHPSQSLLDLFTIKEQFGTFQGLKIAIVGDIRHSRVANSNMKVLKRLGAELFFSGPREWFDDSYLAYGTYLSIDEMVEKVDVMMLLRVQHERHSGTERFTKASYHEKFGLTEERAMKLKEDAIIMHPSPVNRDVEIADSLVESEKSRIVTQMTNGVFIRMAILEVILKEKSRRAKVCTY.

Positions 49 and 50 each coordinate carbamoyl phosphate. Lys-77 serves as a coordination point for L-aspartate. The carbamoyl phosphate site is built by Arg-99, His-126, and Gln-129. L-aspartate is bound by residues Arg-159 and Arg-211. Ser-252 and Pro-253 together coordinate carbamoyl phosphate.

It belongs to the aspartate/ornithine carbamoyltransferase superfamily. ATCase family. As to quaternary structure, heterododecamer (2C3:3R2) of six catalytic PyrB chains organized as two trimers (C3), and six regulatory PyrI chains organized as three dimers (R2).

The enzyme catalyses carbamoyl phosphate + L-aspartate = N-carbamoyl-L-aspartate + phosphate + H(+). Its pathway is pyrimidine metabolism; UMP biosynthesis via de novo pathway; (S)-dihydroorotate from bicarbonate: step 2/3. Functionally, catalyzes the condensation of carbamoyl phosphate and aspartate to form carbamoyl aspartate and inorganic phosphate, the committed step in the de novo pyrimidine nucleotide biosynthesis pathway. The protein is Aspartate carbamoyltransferase catalytic subunit of Listeria welshimeri serovar 6b (strain ATCC 35897 / DSM 20650 / CCUG 15529 / CIP 8149 / NCTC 11857 / SLCC 5334 / V8).